The sequence spans 167 residues: Regulator of sigma D (167 aa).

Belongs to the Rsd/AlgQ family. As to quaternary structure, interacts with RpoD.

It localises to the cytoplasm. Functionally, binds RpoD and negatively regulates RpoD-mediated transcription activation by preventing the interaction between the primary sigma factor RpoD with the catalytic core of the RNA polymerase and with promoter DNA. May be involved in replacement of the RNA polymerase sigma subunit from RpoD to RpoS during the transition from exponential growth to the stationary phase. This chain is Regulator of sigma D, found in Yersinia enterocolitica serotype O:8 / biotype 1B (strain NCTC 13174 / 8081).